A 323-amino-acid chain; its full sequence is Ribose-phosphate pyrophosphokinase (323 aa).

Residues 38–40 and 96–97 contribute to the ATP site; these read DGE and RQ. Residues H130 and D170 each contribute to the Mg(2+) site. K193 is an active-site residue. Residues R195, D219, and 223 to 227 contribute to the D-ribose 5-phosphate site; that span reads DTAGT.

This sequence belongs to the ribose-phosphate pyrophosphokinase family. Class I subfamily. Homohexamer. Mg(2+) serves as cofactor.

It is found in the cytoplasm. It catalyses the reaction D-ribose 5-phosphate + ATP = 5-phospho-alpha-D-ribose 1-diphosphate + AMP + H(+). It participates in metabolic intermediate biosynthesis; 5-phospho-alpha-D-ribose 1-diphosphate biosynthesis; 5-phospho-alpha-D-ribose 1-diphosphate from D-ribose 5-phosphate (route I): step 1/1. Its function is as follows. Involved in the biosynthesis of the central metabolite phospho-alpha-D-ribosyl-1-pyrophosphate (PRPP) via the transfer of pyrophosphoryl group from ATP to 1-hydroxyl of ribose-5-phosphate (Rib-5-P). The polypeptide is Ribose-phosphate pyrophosphokinase (Chlorobaculum tepidum (strain ATCC 49652 / DSM 12025 / NBRC 103806 / TLS) (Chlorobium tepidum)).